Here is a 318-residue protein sequence, read N- to C-terminus: Aspartate carbamoyltransferase catalytic subunit (318 aa).

Residues arginine 66 and threonine 67 each coordinate carbamoyl phosphate. Lysine 94 lines the L-aspartate pocket. Carbamoyl phosphate is bound by residues arginine 116, histidine 144, and glutamine 147. L-aspartate is bound by residues arginine 177 and arginine 231. Positions 272 and 273 each coordinate carbamoyl phosphate.

The protein belongs to the aspartate/ornithine carbamoyltransferase superfamily. ATCase family. Heterododecamer (2C3:3R2) of six catalytic PyrB chains organized as two trimers (C3), and six regulatory PyrI chains organized as three dimers (R2).

The enzyme catalyses carbamoyl phosphate + L-aspartate = N-carbamoyl-L-aspartate + phosphate + H(+). It participates in pyrimidine metabolism; UMP biosynthesis via de novo pathway; (S)-dihydroorotate from bicarbonate: step 2/3. Catalyzes the condensation of carbamoyl phosphate and aspartate to form carbamoyl aspartate and inorganic phosphate, the committed step in the de novo pyrimidine nucleotide biosynthesis pathway. The chain is Aspartate carbamoyltransferase catalytic subunit from Frankia casuarinae (strain DSM 45818 / CECT 9043 / HFP020203 / CcI3).